Reading from the N-terminus, the 165-residue chain is Type 3 secretion system regulator YopR (165 aa).

The 5' secretion signal stretch occupies residues 2 to 11 (TVTLNRGSIT). The interval 131–149 (PYLSELINKELMILLPYNS) is 3' secretion signal.

The protein belongs to the YopR family.

The protein localises to the secreted. May be involved in the regulation of the assembly of the type III secretion system (T3SS), also called injectisome, which is used to inject bacterial effector proteins into eukaryotic host cells. May control the secretion and/or polymerization of YscF/SctF, the principal component of the needle filament, thereby impacting the assembly of the T3SS. Involved in pathogenesis. Essential for the establishment of Yersinia infections in a mouse model system. This chain is Type 3 secretion system regulator YopR, found in Yersinia enterocolitica.